A 432-amino-acid polypeptide reads, in one-letter code: Glutamyl-tRNA reductase (432 aa).

Residues 55-58 (TCNR), Ser114, 119-121 (ETQ), and Gln125 contribute to the substrate site. Cys56 functions as the Nucleophile in the catalytic mechanism. 194–199 (GAGEMI) provides a ligand contact to NADP(+).

This sequence belongs to the glutamyl-tRNA reductase family. In terms of assembly, homodimer.

The enzyme catalyses (S)-4-amino-5-oxopentanoate + tRNA(Glu) + NADP(+) = L-glutamyl-tRNA(Glu) + NADPH + H(+). The protein operates within porphyrin-containing compound metabolism; protoporphyrin-IX biosynthesis; 5-aminolevulinate from L-glutamyl-tRNA(Glu): step 1/2. Functionally, catalyzes the NADPH-dependent reduction of glutamyl-tRNA(Glu) to glutamate 1-semialdehyde (GSA). The polypeptide is Glutamyl-tRNA reductase (Burkholderia orbicola (strain MC0-3)).